Here is a 476-residue protein sequence, read N- to C-terminus: MLKVYNTLTRKEEEFKPLNEKEVKMYVCGPTVYDHTHLGHGRTYVSFDIIRRYLEHIGYTVNLVINFTDIDDKIIKRANENGKNPKELSEQFITVFLNDMTTLKVKPADIYPKVTEHIPEIIAFIEKLIEKGFAYETENGVYFEVKKFENYGKLSNINLEDLFSGVRIETSEEKKNPEDFALWKTAKPGEPKWKSPFVEGRPGWHIECSAMSSKYLGEQFDIHGGGRDLSFPHHENEIAQSVAYSGKDWVNYWLHTGFVMVNGEKMSKSLGNFVTIEGISKEYDPEILRFFFIQRHYRSPIDYTAESITHVKNNLEKIYNVIENIRISLEKSEKSRVWGENEVLLYDILKNSKRNFYEAMNSDFNTVEALKSVFEVSNGVNKYLSLVKTPSEGLLLKAFDFFKIVGEIFGLFENYFKTSSESDDEEFIKFLIELRSDLRLQKNYEMSDKIRDGLKNLGYQIEDNPKEGTVFKKINI.

Position 28 (Cys-28) interacts with Zn(2+). A 'HIGH' region motif is present at residues 30 to 40 (PTVYDHTHLGH). Zn(2+) contacts are provided by Cys-208, His-233, and Glu-237. The 'KMSKS' region signature appears at 265-269 (KMSKS). Lys-268 serves as a coordination point for ATP.

The protein belongs to the class-I aminoacyl-tRNA synthetase family. The cofactor is Zn(2+).

Its subcellular location is the cytoplasm. It catalyses the reaction tRNA(Cys) + L-cysteine + ATP = L-cysteinyl-tRNA(Cys) + AMP + diphosphate. The chain is Cysteine--tRNA ligase from Methanococcus maripaludis (strain C6 / ATCC BAA-1332).